The sequence spans 457 residues: Siroheme synthase 2 (457 aa).

The tract at residues Met-1–Thr-204 is precorrin-2 dehydrogenase /sirohydrochlorin ferrochelatase. NAD(+) contacts are provided by residues Asp-22–Val-23 and Leu-43–Asp-44. Ser-128 is subject to Phosphoserine. Residues Gly-216–His-457 are uroporphyrinogen-III C-methyltransferase. Pro-225 provides a ligand contact to S-adenosyl-L-methionine. Residue Asp-248 is the Proton acceptor of the active site. Residue Lys-270 is the Proton donor of the active site. S-adenosyl-L-methionine contacts are provided by residues Gly-301–Asp-303, Ile-306, Thr-331–Ala-332, Met-382, and Gly-411.

In the N-terminal section; belongs to the precorrin-2 dehydrogenase / sirohydrochlorin ferrochelatase family. The protein in the C-terminal section; belongs to the precorrin methyltransferase family.

The enzyme catalyses uroporphyrinogen III + 2 S-adenosyl-L-methionine = precorrin-2 + 2 S-adenosyl-L-homocysteine + H(+). The catalysed reaction is precorrin-2 + NAD(+) = sirohydrochlorin + NADH + 2 H(+). It catalyses the reaction siroheme + 2 H(+) = sirohydrochlorin + Fe(2+). It functions in the pathway cofactor biosynthesis; adenosylcobalamin biosynthesis; precorrin-2 from uroporphyrinogen III: step 1/1. The protein operates within cofactor biosynthesis; adenosylcobalamin biosynthesis; sirohydrochlorin from precorrin-2: step 1/1. Its pathway is porphyrin-containing compound metabolism; siroheme biosynthesis; precorrin-2 from uroporphyrinogen III: step 1/1. It participates in porphyrin-containing compound metabolism; siroheme biosynthesis; siroheme from sirohydrochlorin: step 1/1. It functions in the pathway porphyrin-containing compound metabolism; siroheme biosynthesis; sirohydrochlorin from precorrin-2: step 1/1. Multifunctional enzyme that catalyzes the SAM-dependent methylations of uroporphyrinogen III at position C-2 and C-7 to form precorrin-2 via precorrin-1. Then it catalyzes the NAD-dependent ring dehydrogenation of precorrin-2 to yield sirohydrochlorin. Finally, it catalyzes the ferrochelation of sirohydrochlorin to yield siroheme. The sequence is that of Siroheme synthase 2 from Klebsiella pneumoniae subsp. pneumoniae (strain ATCC 700721 / MGH 78578).